Here is a 209-residue protein sequence, read N- to C-terminus: Ribosomal RNA small subunit methyltransferase G (209 aa).

S-adenosyl-L-methionine-binding residues include glycine 74, phenylalanine 79, and arginine 139.

The protein belongs to the methyltransferase superfamily. RNA methyltransferase RsmG family.

It localises to the cytoplasm. The enzyme catalyses guanosine(527) in 16S rRNA + S-adenosyl-L-methionine = N(7)-methylguanosine(527) in 16S rRNA + S-adenosyl-L-homocysteine. Functionally, specifically methylates the N7 position of guanine in position 527 of 16S rRNA. In Halorhodospira halophila (strain DSM 244 / SL1) (Ectothiorhodospira halophila (strain DSM 244 / SL1)), this protein is Ribosomal RNA small subunit methyltransferase G.